Here is a 138-residue protein sequence, read N- to C-terminus: Small ribosomal subunit protein uS11 (138 aa).

A compositionally biased stretch (polar residues) spans Met1–Thr12. Residues Met1–Asn37 are disordered. Over residues Lys13 to Lys22 the composition is skewed to basic residues.

Belongs to the universal ribosomal protein uS11 family. Part of the 30S ribosomal subunit. Interacts with proteins S7 and S18. Binds to IF-3.

Its function is as follows. Located on the platform of the 30S subunit, it bridges several disparate RNA helices of the 16S rRNA. Forms part of the Shine-Dalgarno cleft in the 70S ribosome. The chain is Small ribosomal subunit protein uS11 from Roseiflexus castenholzii (strain DSM 13941 / HLO8).